Consider the following 503-residue polypeptide: GMP synthase [glutamine-hydrolyzing] (503 aa).

Positions 3–189 (PVLVVDFGSQ…AFLSSFAAPN (187 aa)) constitute a Glutamine amidotransferase type-1 domain. C80 serves as the catalytic Nucleophile. Residues H165 and E167 contribute to the active site. The region spanning 190–380 (WDPEQTICGT…LGIPKHIVHR (191 aa)) is the GMPS ATP-PPase domain. Position 217–223 (217–223 (SGGVDSV)) interacts with ATP.

Homodimer.

It catalyses the reaction XMP + L-glutamine + ATP + H2O = GMP + L-glutamate + AMP + diphosphate + 2 H(+). It participates in purine metabolism; GMP biosynthesis; GMP from XMP (L-Gln route): step 1/1. Its function is as follows. Catalyzes the synthesis of GMP from XMP. This is GMP synthase [glutamine-hydrolyzing] from Tropheryma whipplei (strain TW08/27) (Whipple's bacillus).